The chain runs to 180 residues: ATP-dependent protease subunit HslV (180 aa).

Thr-6 is an active-site residue. Na(+) is bound by residues Ala-164, Cys-167, and Thr-170.

The protein belongs to the peptidase T1B family. HslV subfamily. As to quaternary structure, a double ring-shaped homohexamer of HslV is capped on each side by a ring-shaped HslU homohexamer. The assembly of the HslU/HslV complex is dependent on binding of ATP.

It localises to the cytoplasm. The catalysed reaction is ATP-dependent cleavage of peptide bonds with broad specificity.. Its activity is regulated as follows. Allosterically activated by HslU binding. Functionally, protease subunit of a proteasome-like degradation complex believed to be a general protein degrading machinery. In Borrelia recurrentis (strain A1), this protein is ATP-dependent protease subunit HslV.